The following is a 484-amino-acid chain: Palmitoyltransferase ZDHHC1 (484 aa).

Composition is skewed to polar residues over residues 1-11 (MNICNKPSNKT) and 19-34 (TAPS…LQGQ). Positions 1-38 (MNICNKPSNKTAPEKSVWTAPSQDSGPSPELQGQRSRR) are disordered. The Cytoplasmic portion of the chain corresponds to 1-49 (MNICNKPSNKTAPEKSVWTAPSQDSGPSPELQGQRSRRNGWSWPPHPLQ). The mediates interaction with STING1 stretch occupies residues 1–268 (MNICNKPSNK…GHLLCFHIYL (268 aa)). A helical membrane pass occupies residues 50-70 (IVAWLLYLFFAVIGFGVLVPL). The Lumenal portion of the chain corresponds to 71-74 (LPHH). Residues 75-95 (WVPAGYACMGAIFAGHLVVHL) traverse the membrane as a helical segment. Topologically, residues 96 to 182 (TAVSIDPADA…YRLFLHSVAS (87 aa)) are cytoplasmic. Residues 131–181 (LHCNLCDVDVSARSKHCSACNKCVCGFDHHCKWLNNCVGERNYRLFLHSVA) form the DHHC domain. Catalysis depends on C161, which acts as the S-palmitoyl cysteine intermediate. The chain crosses the membrane as a helical span at residues 183–203 (ALLGVLLLVLVATYVFVEFFV). Topologically, residues 204–238 (NPMRLRTNQHFEVLKNHTDVWFVFLPAAPVETQAP) are lumenal. Residues 239 to 259 (AILALAALLILLGLLSTALLG) traverse the membrane as a helical segment. Residues 260–484 (HLLCFHIYLM…GTPGGGDGLP (225 aa)) are Cytoplasmic-facing. Disordered stretches follow at residues 341–415 (TQGQ…VHAG) and 444–484 (LGAP…DGLP). Basic residues predominate over residues 364–374 (PQKKRKRRVYR). The span at 380 to 392 (VLDRELPLPRLRE) shows a compositional bias: basic and acidic residues. Low complexity predominate over residues 395-415 (TPSRRSSSSSDSTSASPVHAG). Positions 475–484 (GTPGGGDGLP) are enriched in gly residues.

Belongs to the DHHC palmitoyltransferase family. In terms of assembly, interacts with STING1; ZDHHC1 constitutively interacts with STING1 and in presence of DNA viruses activates it by promoting its cGAMP-induced oligomerization and the recruitment of downstream signaling components. Expressed at high levels in fetal lung and heart. Expressed at lower levels in fetal liver and brain. Also detected in adult islet cells of pancreas, Leydig cells of testis, retina and molecular layer of cerebellum.

Its subcellular location is the endosome membrane. It is found in the endoplasmic reticulum membrane. It localises to the golgi apparatus. The enzyme catalyses L-cysteinyl-[protein] + hexadecanoyl-CoA = S-hexadecanoyl-L-cysteinyl-[protein] + CoA. Its function is as follows. Palmitoyltransferase that catalyzes the addition of palmitate onto various protein substrates, such as NCDN and NLRP3. Has a palmitoyltransferase activity toward NCDN and regulates NCDN association with endosome membranes through this palmitoylation. Acts as an activator of the NLRP3 inflammasome by mediating palmitoylation of 'Cys-130' and 'Cys-958' of NLRP3, thereby promoting NLRP3 phosphorylation and activation by NEK7. Also has a palmitoyltransferase activity-independent function in DNA virus-triggered and CGAS-mediated innate immune response. Functions as an activator of STING1 by promoting its cGAMP-induced oligomerization and the recruitment of downstream signaling components. The protein is Palmitoyltransferase ZDHHC1 of Mus musculus (Mouse).